The primary structure comprises 582 residues: Aspartate--tRNA ligase (582 aa).

Glu-174 lines the L-aspartate pocket. Residues 198–201 form an aspartate region; that stretch reads QITK. Arg-220 is an L-aspartate binding site. ATP contacts are provided by residues 220 to 222 and Gln-229; that span reads RDE. An L-aspartate-binding site is contributed by His-443. Glu-477 contributes to the ATP binding site. Arg-484 contributes to the L-aspartate binding site. 529–532 provides a ligand contact to ATP; the sequence is GLDR.

The protein belongs to the class-II aminoacyl-tRNA synthetase family. Type 1 subfamily. In terms of assembly, homodimer.

It localises to the cytoplasm. It carries out the reaction tRNA(Asp) + L-aspartate + ATP = L-aspartyl-tRNA(Asp) + AMP + diphosphate. Catalyzes the attachment of L-aspartate to tRNA(Asp) in a two-step reaction: L-aspartate is first activated by ATP to form Asp-AMP and then transferred to the acceptor end of tRNA(Asp). The sequence is that of Aspartate--tRNA ligase from Streptococcus pyogenes serotype M5 (strain Manfredo).